The sequence spans 366 residues: D-alanine--D-alanine ligase A (366 aa).

The 204-residue stretch at 145-348 (KRLLRDAGLK…YRELITALIE (204 aa)) folds into the ATP-grasp domain. 175–230 (VEQLGLPLFVKPANQGSSVGVSKVKREADLRAALDEAFRYDHKVLVEQAVIGREIE) is a binding site for ATP. D302, E315, and N317 together coordinate Mg(2+).

The protein belongs to the D-alanine--D-alanine ligase family. Requires Mg(2+) as cofactor. Mn(2+) serves as cofactor.

Its subcellular location is the cytoplasm. It carries out the reaction 2 D-alanine + ATP = D-alanyl-D-alanine + ADP + phosphate + H(+). It participates in cell wall biogenesis; peptidoglycan biosynthesis. Its function is as follows. Cell wall formation. This Chromobacterium violaceum (strain ATCC 12472 / DSM 30191 / JCM 1249 / CCUG 213 / NBRC 12614 / NCIMB 9131 / NCTC 9757 / MK) protein is D-alanine--D-alanine ligase A.